The primary structure comprises 195 residues: MLRFAVIGHKAVSTPDFSLNDMPGGAGRMDVLCRCINASFFLSHDLRRDTECFLILKGGEQADPANTVTLRFSGEKIKSLNPDERSAGALIKKALVTIPEEEYQRAAPGISIRKSGLAKLLEEHPFAVLDENGEDIRTAETLPENFILSDHQNFTEEEMELIKDLPKYSVGPRVLHADHTIIIILNEFDRRGEQA.

L129 provides a ligand contact to S-adenosyl-L-methionine.

It belongs to the methyltransferase superfamily. TrmY family. As to quaternary structure, homodimer.

The protein localises to the cytoplasm. It catalyses the reaction pseudouridine(54) in tRNA + S-adenosyl-L-methionine = N(1)-methylpseudouridine(54) in tRNA + S-adenosyl-L-homocysteine + H(+). Functionally, specifically catalyzes the N1-methylation of pseudouridine at position 54 (Psi54) in tRNAs. The polypeptide is tRNA (pseudouridine(54)-N(1))-methyltransferase (Methanocorpusculum labreanum (strain ATCC 43576 / DSM 4855 / Z)).